The sequence spans 266 residues: Secreted RxLR effector protein 128 (266 aa).

The signal sequence occupies residues 1-18; sequence MRGAFYTAIALLIGRSQT. Positions 48–63 match the RxLR-dEER motif; sequence RYLRDGLAHSATNEER.

The protein belongs to the RxLR effector family.

The protein resides in the secreted. It is found in the host nucleus. In terms of biological role, secreted effector that dos not suppress the host cell death induced by cell death-inducing proteins. The protein is Secreted RxLR effector protein 128 of Plasmopara viticola (Downy mildew of grapevine).